Consider the following 874-residue polypeptide: Collagen alpha-2(I) chain (874 aa).

Residues 1 to 874 (SGGFDFSFLP…FGYEGDFYRA (874 aa)) form a disordered region. 4-hydroxyproline occurs at positions 10 and 13. An Allysine modification is found at Lys-16. Over residues 27–66 (LMGPRGPPGASGAPGPQGFQGPAGEPGEPGQTGPAGARGP) the composition is skewed to low complexity. 4-hydroxyproline is present on residues Pro-34 and Pro-40. Position 93 is a 5-hydroxylysine; alternate (Lys-93). Lys-93 carries an O-linked (Gal...) hydroxylysine; alternate glycan. Composition is skewed to low complexity over residues 110–143 (ARGR…SAGP), 188–209 (PGAN…AGAP), and 218–236 (PGPV…AGSK). The segment covering 237–246 (GESGGKGEPG) has biased composition (gly residues). A compositionally biased stretch (low complexity) spans 247–257 (SAGPQGPPGSS). Residues Pro-317 and Pro-320 each carry the 4-hydroxyproline modification. Composition is skewed to low complexity over residues 346-365 (LPGI…RGEA), 434-451 (PGES…SRGP), and 463-473 (EPGVVGAPGTA). Over residues 474-483 (GPAGSGGLPG) the composition is skewed to gly residues. 2 stretches are compositionally biased toward low complexity: residues 491-538 (RGEV…PRGS) and 545-565 (VGPA…QPGA). A compositionally biased stretch (basic and acidic residues) spans 566–575 (KGERGTKGPK). The segment covering 583-593 (PTGPVGSAGPA) has biased composition (low complexity). A compositionally biased stretch (gly residues) spans 603 to 612 (GSRGDGGPPG). Residues 614–623 (TGFPGAAGRT) show a composition bias toward low complexity. Gly residues predominate over residues 648–662 (GPVGRGETGAGGPPG). 2 stretches are compositionally biased toward low complexity: residues 663–697 (FTGE…LGLP) and 705–724 (LPGV…AGPP). The segment covering 725–744 (GARGDGNPGSDGPPGRGAAG) has biased composition (gly residues). 2 stretches are compositionally biased toward low complexity: residues 745-755 (APGPHGTVGPA) and 763-778 (EPGP…ALGP).

The protein belongs to the fibrillar collagen family. Trimers of one alpha 2(I) and two alpha 1(I) chains. Interacts (via C-terminus) with TMEM131 (via PapD-L domain); the interaction is direct and is involved in assembly and TRAPPIII ER-to-Golgi transport complex-dependent secretion of collagen. In terms of processing, prolines at the third position of the tripeptide repeating unit (G-X-Y) are hydroxylated in some or all of the chains. In terms of tissue distribution, expressed in bones.

Its subcellular location is the secreted. It localises to the extracellular space. It is found in the extracellular matrix. Type I collagen is a member of group I collagen (fibrillar forming collagen). The sequence is that of Collagen alpha-2(I) chain from Megalonyx jeffersonii (Jefferson's ground sloth).